The primary structure comprises 725 residues: Kinesin-like protein KIF2C (725 aa).

Ala2 carries the post-translational modification N-acetylalanine. Residues 2-254 (AMDSSLQARL…CHPLTMTDPI (253 aa)) form a globular region. A phosphoserine mark is found at Ser6 and Ser22. Residues 89 to 116 (QKQKRRSVNSKIPAPKESLRSRSTRMST) are disordered. Ser95 is subject to Phosphoserine; by AURKB. The short motif at 98–101 (SKIP) is the Microtubule tip localization signal element. 8 positions are modified to phosphoserine: Ser106, Ser109, Ser111, Ser115, Ser166, Ser175, Ser187, and Ser192. The tract at residues 207–238 (EKKAQNSEMRMKRAQEYDSSFPNWEFARMIKE) is negative regulator of microtubule-binding. The 331-residue stretch at 258–588 (RICVCVRKRP…LRYADRVKEL (331 aa)) folds into the Kinesin motor domain. ATP is bound by residues Arg264 and 348–355 (GQTGSGKT). The Nuclear localization signal signature appears at 415 to 418 (KKAK). Residues Ser519, Ser621, and Ser633 each carry the phosphoserine modification. Residues 618-658 (GNLSKEEEELSSQMSSFNEAMTQIRELEEKAMEELKEIIQQ) adopt a coiled-coil conformation.

Belongs to the TRAFAC class myosin-kinesin ATPase superfamily. Kinesin family. MCAK/KIF2 subfamily. Interacts with CENPH. Interacts with MTUS2/TIP150; the interaction is direct. Interacts with MAPRE1; the interaction is direct, regulated by phosphorylation and is probably required for targeting to growing microtubule plus ends. Interacts with KIF18B at microtubule tips; this interaction increases the affinity of both partners for microtubule plus ends and is required for robust microtubule depolymerization. Phosphorylation by AURKA or AURKB strongly reduces KIF18B-binding. In terms of processing, phosphorylation by AURKB, regulates association with centromeres and kinetochores and the microtubule depolymerization activity. Ubiquitinated. Expressed at high levels in thymus and testis, at low levels in small intestine, the mucosal lining of colon, and placenta, and at very low levels in spleen and ovary; expression is not detected in prostate, peripheral blood Leukocytes, heart, brain, lung, liver, skeletal muscle, kidney or pancreas. Isoform 2 is testis-specific.

It localises to the cytoplasm. Its subcellular location is the cytoskeleton. The protein localises to the nucleus. The protein resides in the chromosome. It is found in the centromere. It localises to the kinetochore. Its function is as follows. In complex with KIF18B, constitutes the major microtubule plus-end depolymerizing activity in mitotic cells. Regulates the turnover of microtubules at the kinetochore and functions in chromosome segregation during mitosis. Plays a role in chromosome congression and is required for the lateral to end-on conversion of the chromosome-microtubule attachment. The protein is Kinesin-like protein KIF2C (KIF2C) of Homo sapiens (Human).